The primary structure comprises 64 residues: Large ribosomal subunit protein bL35 (64 aa).

The protein belongs to the bacterial ribosomal protein bL35 family.

This chain is Large ribosomal subunit protein bL35, found in Shewanella halifaxensis (strain HAW-EB4).